Consider the following 557-residue polypeptide: Membrane protein insertase YidC (557 aa).

The chain crosses the membrane as a helical span at residues Asn3 to Trp23. The disordered stretch occupies residues Ala34–Ser60. 4 consecutive transmembrane segments (helical) span residues Val366 to Tyr386, Leu436 to Leu456, Tyr480 to Ala500, and Pro514 to Val534.

This sequence belongs to the OXA1/ALB3/YidC family. Type 1 subfamily. In terms of assembly, interacts with the Sec translocase complex via SecD. Specifically interacts with transmembrane segments of nascent integral membrane proteins during membrane integration.

The protein localises to the cell inner membrane. In terms of biological role, required for the insertion and/or proper folding and/or complex formation of integral membrane proteins into the membrane. Involved in integration of membrane proteins that insert both dependently and independently of the Sec translocase complex, as well as at least some lipoproteins. Aids folding of multispanning membrane proteins. This is Membrane protein insertase YidC from Thioalkalivibrio sulfidiphilus (strain HL-EbGR7).